The primary structure comprises 275 residues: 3-oxo-isoapionate decarboxylase (275 aa).

The enzyme catalyses 3-oxoisoapionate + H(+) = L-erythrulose + CO2. It participates in carbohydrate metabolism. In terms of biological role, involved in catabolism of D-apiose. Catalyzes decarboxylation of 3-oxo-isoapionate to L-erythrulose. This chain is 3-oxo-isoapionate decarboxylase, found in Pectobacterium atrosepticum (strain SCRI 1043 / ATCC BAA-672) (Erwinia carotovora subsp. atroseptica).